The sequence spans 538 residues: MEIKEISVPQQGVVADYMNGKKEIQSCFDYMLTEDAFKQRLHDLREREFFRQDLVAHLLEYNTKLQAGESTLQNVKALGDENTYVVIAGQQAGLLTGPLYTIHKVISILQLAKEKEESLGVKVVPVFWIAGEDHDMDEINHTFVAKNKKMKKTIFYDRNPKKASASESELSVEDCRNWIEEIFKTYPETNFTKDVLKFVDDALKKSNTYVDFFAHLITKIFANSGLILVDSHHPELRKLEIPFFKRIISKYKEVQEGLRNQQEVIKELGYKPIIETKSHAVHIFMEIDDERVLLEDQQGKFVGKDGAHSFSYEELIEEMERNPARFSNNVVTRPLMQEYVFPTLAFIGGPGELAYWSELQQVFHTVGFQMPPVVPRLTITYVERDIATDLFDLQLRESDPFLNDVDKLRENWLSNQIEEPIDDHFEKAKKEIADIHTSLQQFVKKIEPGLGAFAGKNELKINEQIELLERMLKRNVEKKYEVQLNKFRRIQFALRPLGAPQERVWNVCYYLNQFGLDFVDRVMENPFSWDGKHHVIKL.

The stretch at 248 to 268 (ISKYKEVQEGLRNQQEVIKEL) forms a coiled coil.

It belongs to the BshC family.

In terms of biological role, involved in bacillithiol (BSH) biosynthesis. May catalyze the last step of the pathway, the addition of cysteine to glucosamine malate (GlcN-Mal) to generate BSH. In Bacillus cereus (strain ATCC 14579 / DSM 31 / CCUG 7414 / JCM 2152 / NBRC 15305 / NCIMB 9373 / NCTC 2599 / NRRL B-3711), this protein is Putative cysteine ligase BshC.